A 932-amino-acid chain; its full sequence is Protein translocase subunit SecA (932 aa).

Residues Gln87, 105-109 (GEGKT), and Asp515 contribute to the ATP site. Zn(2+)-binding residues include Cys916, Cys918, Cys927, and His928.

It belongs to the SecA family. In terms of assembly, monomer and homodimer. Part of the essential Sec protein translocation apparatus which comprises SecA, SecYEG and auxiliary proteins SecDF-YajC and YidC. Zn(2+) is required as a cofactor.

The protein localises to the cell inner membrane. Its subcellular location is the cytoplasm. The enzyme catalyses ATP + H2O + cellular proteinSide 1 = ADP + phosphate + cellular proteinSide 2.. Its function is as follows. Part of the Sec protein translocase complex. Interacts with the SecYEG preprotein conducting channel. Has a central role in coupling the hydrolysis of ATP to the transfer of proteins into and across the cell membrane, serving both as a receptor for the preprotein-SecB complex and as an ATP-driven molecular motor driving the stepwise translocation of polypeptide chains across the membrane. The chain is Protein translocase subunit SecA from Burkholderia orbicola (strain MC0-3).